A 396-amino-acid polypeptide reads, in one-letter code: Elongation factor Tu (396 aa).

The tr-type G domain maps to Lys-10–Glu-206. Residues Gly-19–Thr-26 form a G1 region. Gly-19–Thr-26 serves as a coordination point for GTP. Thr-26 contributes to the Mg(2+) binding site. The interval Gly-60–Ser-64 is G2. Residues Asp-81–Gly-84 are G3. GTP is bound by residues Asp-81–His-85 and Asn-136–Asp-139. The tract at residues Asn-136 to Asp-139 is G4. The tract at residues Ser-174–Leu-176 is G5.

The protein belongs to the TRAFAC class translation factor GTPase superfamily. Classic translation factor GTPase family. EF-Tu/EF-1A subfamily. In terms of assembly, monomer.

It is found in the cytoplasm. It carries out the reaction GTP + H2O = GDP + phosphate + H(+). Its function is as follows. GTP hydrolase that promotes the GTP-dependent binding of aminoacyl-tRNA to the A-site of ribosomes during protein biosynthesis. The sequence is that of Elongation factor Tu from Nitrobacter hamburgensis (strain DSM 10229 / NCIMB 13809 / X14).